The sequence spans 452 residues: UDP-N-acetylmuramoylalanine--D-glutamate ligase (452 aa).

119 to 125 (GSNGKTT) is a binding site for ATP.

This sequence belongs to the MurCDEF family.

The protein localises to the cytoplasm. The catalysed reaction is UDP-N-acetyl-alpha-D-muramoyl-L-alanine + D-glutamate + ATP = UDP-N-acetyl-alpha-D-muramoyl-L-alanyl-D-glutamate + ADP + phosphate + H(+). Its pathway is cell wall biogenesis; peptidoglycan biosynthesis. Cell wall formation. Catalyzes the addition of glutamate to the nucleotide precursor UDP-N-acetylmuramoyl-L-alanine (UMA). This is UDP-N-acetylmuramoylalanine--D-glutamate ligase from Streptococcus pyogenes serotype M6 (strain ATCC BAA-946 / MGAS10394).